Consider the following 274-residue polypeptide: MDSAEKKLDLSPIELAKRLACHMAVDENYPENPKVIGIGSGSTVVYVVERLLTKPGVDSVVFIPTGFQSKQLIVNNGLRLGDPDCYPNVDVSFDGADEVDDNLQCIKGGGACLFQEKLIAFLAKRLVIVADSRKNSHVLGEYWKKGVPIEVMPMAYASILPQLVELGAIEPKLRMGAPGKAGPVVTDNGNFIIDAHFGLIKNPKELFAKIKLLVGVVEVGLFCDMISAVYFGSKDGSVTVKKASGEKHIIPAPVTAAANEVDAKVAETNAKPLN.

It belongs to the ribose 5-phosphate isomerase family.

It localises to the cytoplasm. It catalyses the reaction aldehydo-D-ribose 5-phosphate = D-ribulose 5-phosphate. Its pathway is carbohydrate degradation; pentose phosphate pathway; D-ribose 5-phosphate from D-ribulose 5-phosphate (non-oxidative stage): step 1/1. In Schizosaccharomyces pombe (strain 972 / ATCC 24843) (Fission yeast), this protein is Ribose-5-phosphate isomerase (rki1).